Here is a 361-residue protein sequence, read N- to C-terminus: SUN domain-containing protein 3 (361 aa).

Residues 1-47 (MSGKAKARRAAMFFRGCSEDASGSTSGSTLLSEDENPDTNGVTRSWK) lie on the Nuclear side of the membrane. Positions 19–38 (EDASGSTSGSTLLSEDENPD) are disordered. Residues 22–31 (SGSTSGSTLL) are compositionally biased toward low complexity. A helical membrane pass occupies residues 48–69 (IILSTMFTLTFLLVGLLSHQWL). The Perinuclear space portion of the chain corresponds to 70-361 (KETEVPQKSR…RVHGTPGKHI (292 aa)). Positions 103-129 (KEQLELLKKESQTLENNFHKILLLIEQ) form a coiled coil. The 162-residue stretch at 197 to 358 (GASIIEAGTS…YRFRVHGTPG (162 aa)) folds into the SUN domain.

In terms of assembly, self-associates. Interacts with SYNE1 and SPAG4/SUN4. Proposed to form a spermatogenesis-specific LINC complex with SYNE1 during sperm head formation possibly implicating a SUN domain-based heterotrimer with SPAG4/SUN4 associating with SYNE1.

The protein resides in the membrane. It is found in the nucleus envelope. The protein localises to the nucleus inner membrane. Its function is as follows. As a probable component of the LINC (LInker of Nucleoskeleton and Cytoskeleton) complex, involved in the connection between the nuclear lamina and the cytoskeleton. The nucleocytoplasmic interactions established by the LINC complex play an important role in the transmission of mechanical forces across the nuclear envelope and in nuclear movement and positioning. May be involved in nuclear remodeling during sperm head formation in spermatogenesis. A probable SUN3:SYNE1 LINC complex may tether spermatid nuclei to posterior cytoskeletal structures such as the manchette. In Macaca fascicularis (Crab-eating macaque), this protein is SUN domain-containing protein 3 (SUN3).